Consider the following 334-residue polypeptide: o-succinylbenzoate synthase (334 aa).

Lysine 107 acts as the Proton donor in catalysis. The Mg(2+) site is built by aspartate 135, glutamate 162, and aspartate 185. The active-site Proton acceptor is lysine 209.

Belongs to the mandelate racemase/muconate lactonizing enzyme family. MenC type 1 subfamily. It depends on a divalent metal cation as a cofactor.

It carries out the reaction (1R,6R)-6-hydroxy-2-succinyl-cyclohexa-2,4-diene-1-carboxylate = 2-succinylbenzoate + H2O. The protein operates within quinol/quinone metabolism; 1,4-dihydroxy-2-naphthoate biosynthesis; 1,4-dihydroxy-2-naphthoate from chorismate: step 4/7. It participates in quinol/quinone metabolism; menaquinone biosynthesis. In terms of biological role, converts 2-succinyl-6-hydroxy-2,4-cyclohexadiene-1-carboxylate (SHCHC) to 2-succinylbenzoate (OSB). This Mycobacterium leprae (strain TN) protein is o-succinylbenzoate synthase.